The following is a 627-amino-acid chain: 1-deoxy-D-xylulose-5-phosphate synthase (627 aa).

Residues His87 and 128–130 (GHS) each bind thiamine diphosphate. Mg(2+) is bound at residue Asp159. Thiamine diphosphate-binding positions include 160 to 161 (GA), Asn188, Phe295, and Glu375. Position 188 (Asn188) interacts with Mg(2+).

Belongs to the transketolase family. DXPS subfamily. Homodimer. The cofactor is Mg(2+). It depends on thiamine diphosphate as a cofactor.

The catalysed reaction is D-glyceraldehyde 3-phosphate + pyruvate + H(+) = 1-deoxy-D-xylulose 5-phosphate + CO2. It participates in metabolic intermediate biosynthesis; 1-deoxy-D-xylulose 5-phosphate biosynthesis; 1-deoxy-D-xylulose 5-phosphate from D-glyceraldehyde 3-phosphate and pyruvate: step 1/1. Functionally, catalyzes the acyloin condensation reaction between C atoms 2 and 3 of pyruvate and glyceraldehyde 3-phosphate to yield 1-deoxy-D-xylulose-5-phosphate (DXP). The sequence is that of 1-deoxy-D-xylulose-5-phosphate synthase from Pseudomonas paraeruginosa (strain DSM 24068 / PA7) (Pseudomonas aeruginosa (strain PA7)).